We begin with the raw amino-acid sequence, 719 residues long: Protein borderless (719 aa).

The signal sequence occupies residues 1-33 (MPAKRSRTFRQSGSALLALLAIILLMNISCTSA). At 34–650 (ARDHRRQTNL…IDVPSQRKVR (617 aa)) the chain is on the extracellular side. 4 Ig-like domains span residues 40–128 (QTNL…CQVS), 134–241 (PSVR…AFLN), 246–334 (AKVI…PVIS), and 341–429 (PIFS…AELM). Intrachain disulfides connect C55–C125, C172–C224, C267–C318, and C363–C413. Fibronectin type-III domains lie at 434 to 527 (APRA…TLPS) and 555 to 646 (APWN…VPSQ). The chain crosses the membrane as a helical span at residues 651-671 (ALIIGSSVGVIFLLCALCAFL). At 672–719 (YVKRSCLRHLFAKDSSASEDEDTAESGDCDSDEQDQRDRDSIKIRQST) the chain is on the cytoplasmic side. The disordered stretch occupies residues 685–719 (DSSASEDEDTAESGDCDSDEQDQRDRDSIKIRQST). Positions 688–704 (ASEDEDTAESGDCDSDE) are enriched in acidic residues. A compositionally biased stretch (basic and acidic residues) spans 705 to 719 (QDQRDRDSIKIRQST).

Belongs to the immunoglobulin superfamily. In terms of assembly, interacts with tutl. As to expression, in the visual system, expressed in lamina and medulla (at protein level).

Its subcellular location is the cell membrane. It localises to the cell projection. The protein resides in the axon. In terms of biological role, in the developing eye, has a role in axonal targeting of the R7 photoreceptor where it functions together with tutl. Probably mediates homotypic cell adhesion; the effect is inhibited by Lar. In Drosophila melanogaster (Fruit fly), this protein is Protein borderless.